The following is a 554-amino-acid chain: Probable urocanate hydratase (554 aa).

NAD(+) is bound by residues 49–50, Gln127, Glu194, 240–241, 261–265, 271–272, and Tyr320; these read GG, NA, QTAAH, and YI. The active site involves Cys408. Position 490 (Gly490) interacts with NAD(+).

This sequence belongs to the urocanase family. It depends on NAD(+) as a cofactor.

It localises to the cytoplasm. The catalysed reaction is 4-imidazolone-5-propanoate = trans-urocanate + H2O. Its pathway is amino-acid degradation; L-histidine degradation into L-glutamate; N-formimidoyl-L-glutamate from L-histidine: step 2/3. Its function is as follows. Catalyzes the conversion of urocanate to 4-imidazolone-5-propionate. This is Probable urocanate hydratase from Thermoplasma acidophilum (strain ATCC 25905 / DSM 1728 / JCM 9062 / NBRC 15155 / AMRC-C165).